The sequence spans 192 residues: MAEHGLKIAVVGPQRTGKTLLCRALAEQPILLGEMSYQPTAAVRIQEISRVLGIDRVKVQFWDVSGSVQYQSYWPVLAKEVDGLLMVIDPNRPEQERDLETFYRNFAEPNNLYTRQCMVMAIQVQKEGGGLGGWQGLQGGLKKLSQSYVAINPANPAAGVQEAYSHLDVLFQGALQSKKEALESSYMNQEDQ.

GTP-binding positions include 12–19 and 62–69; these read GPQRTGKT and WDVSGSVQ.

Belongs to the small GTPase superfamily. Rab family. As to quaternary structure, component of the IFT complex B, composed of IFT88, IFT70, IFT52, IFT46, IFT27, IFT25 and IFT22.

The protein resides in the cell projection. It is found in the cilium. It localises to the flagellum. In terms of biological role, component of the intraflagellar transport (IFT) complex B. Functions in regulating the cellular pool size of both complex A and complex B and thus plays a critical role in determining the cellular availability of IFT particles. The sequence is that of Intraflagellar transport protein 22 (FAP9) from Chlamydomonas reinhardtii (Chlamydomonas smithii).